Reading from the N-terminus, the 274-residue chain is Large ribosomal subunit protein uL2cz/uL2cy (274 aa).

Disordered regions lie at residues 1-23 (MAIH…SQVK) and 223-274 (MNPV…RRSK). Positions 7 to 23 (KTSTPSTRNGTVGSQVK) are enriched in polar residues.

Belongs to the universal ribosomal protein uL2 family. In terms of assembly, part of the 50S ribosomal subunit.

Its subcellular location is the plastid. The protein localises to the chloroplast. This chain is Large ribosomal subunit protein uL2cz/uL2cy (rpl2-A), found in Nandina domestica (Heavenly bamboo).